The following is a 262-amino-acid chain: Spindlin-Z (262 aa).

Residues 1 to 50 (MKTPFGKSPGQRSRADAGHAGVSASMMKKRTSHKKHRNNVGPSKPISQPR) are disordered. Positions 27 to 38 (MKKRTSHKKHRN) are enriched in basic residues.

The protein belongs to the SPIN/STSY family. As to expression, expressed in several tissues including testis.

The protein resides in the nucleus. May play a role in mitosis. This is Spindlin-Z (SPINZ) from Gallus gallus (Chicken).